A 310-amino-acid polypeptide reads, in one-letter code: tRNA-cytidine(32) 2-sulfurtransferase (310 aa).

The PP-loop motif signature appears at 48–53 (SGGKDS). [4Fe-4S] cluster is bound by residues Cys-123, Cys-126, and Cys-214.

The protein belongs to the TtcA family. Homodimer. It depends on Mg(2+) as a cofactor. [4Fe-4S] cluster serves as cofactor.

The protein resides in the cytoplasm. The enzyme catalyses cytidine(32) in tRNA + S-sulfanyl-L-cysteinyl-[cysteine desulfurase] + AH2 + ATP = 2-thiocytidine(32) in tRNA + L-cysteinyl-[cysteine desulfurase] + A + AMP + diphosphate + H(+). It participates in tRNA modification. Functionally, catalyzes the ATP-dependent 2-thiolation of cytidine in position 32 of tRNA, to form 2-thiocytidine (s(2)C32). The sulfur atoms are provided by the cysteine/cysteine desulfurase (IscS) system. The polypeptide is tRNA-cytidine(32) 2-sulfurtransferase (Vibrio cholerae serotype O1 (strain ATCC 39315 / El Tor Inaba N16961)).